The following is a 156-amino-acid chain: Transcription elongation factor GreA (156 aa).

Residues 1-32 are a coiled coil; that stretch reads MKKVRLTREGYEKLKKELEDLKRKFMYEISER.

Belongs to the GreA/GreB family.

Necessary for efficient RNA polymerase transcription elongation past template-encoded arresting sites. The arresting sites in DNA have the property of trapping a certain fraction of elongating RNA polymerases that pass through, resulting in locked ternary complexes. Cleavage of the nascent transcript by cleavage factors such as GreA or GreB allows the resumption of elongation from the new 3'terminus. GreA releases sequences of 2 to 3 nucleotides. The polypeptide is Transcription elongation factor GreA (Thermotoga petrophila (strain ATCC BAA-488 / DSM 13995 / JCM 10881 / RKU-1)).